Reading from the N-terminus, the 169-residue chain is S-ribosylhomocysteine lyase (169 aa).

Positions 54, 58, and 128 each coordinate Fe cation.

Belongs to the LuxS family. As to quaternary structure, homodimer. Requires Fe cation as cofactor.

It catalyses the reaction S-(5-deoxy-D-ribos-5-yl)-L-homocysteine = (S)-4,5-dihydroxypentane-2,3-dione + L-homocysteine. In terms of biological role, involved in the synthesis of autoinducer 2 (AI-2) which is secreted by bacteria and is used to communicate both the cell density and the metabolic potential of the environment. The regulation of gene expression in response to changes in cell density is called quorum sensing. Catalyzes the transformation of S-ribosylhomocysteine (RHC) to homocysteine (HC) and 4,5-dihydroxy-2,3-pentadione (DPD). The chain is S-ribosylhomocysteine lyase from Shewanella oneidensis (strain ATCC 700550 / JCM 31522 / CIP 106686 / LMG 19005 / NCIMB 14063 / MR-1).